The chain runs to 349 residues: Cytokine response-modifying protein B (349 aa).

A signal peptide spans 1 to 22 (MKSVLYLYILFLSCIIINGRDA). Residues 1–160 (MKSVLYLYIL…SPCGFGTYSH (160 aa)) are TNF-binding. 2 TNFR-Cys repeats span residues 31–66 (KCKD…TQCT) and 67–108 (PCGS…NRIC). 6 disulfides stabilise this stretch: cysteine 32-cysteine 43, cysteine 44-cysteine 57, cysteine 47-cysteine 65, cysteine 68-cysteine 83, cysteine 86-cysteine 100, and cysteine 90-cysteine 108. N-linked (GlcNAc...) asparagine; by host glycosylation is found at asparagine 101, asparagine 173, asparagine 189, asparagine 215, and asparagine 248. The tract at residues 161–349 (TVSSADKCEP…ITNSKPTRFL (189 aa)) is chemokine-binding.

This sequence belongs to the orthopoxvirus OPG002 family. Homodimer. Interacts with host TNF, LTA, CCL28, CCL25, CXCL12, CXCL13 and CXCl14.

It localises to the secreted. In terms of biological role, inhibits host immune defense by binding to host TNF and various chemokines in the extracellular space. Binds host CC chemokines (beta chemokines) and CXC chemokines (alpha chemokines). In Variola virus (isolate Human/India/Ind3/1967) (VARV), this protein is Cytokine response-modifying protein B (OPG002).